Here is a 403-residue protein sequence, read N- to C-terminus: Propionate kinase (403 aa).

The protein belongs to the acetokinase family. PduW subfamily.

It is found in the cytoplasm. The enzyme catalyses propanoate + ATP = propanoyl phosphate + ADP. It functions in the pathway polyol metabolism; 1,2-propanediol degradation. Works with phosphate acetyltransferase (pta) to capture exogenous propionate and regenerate propionyl-CoA during degradation of 1,2-propanediol (1,2-PD). This Citrobacter rodentium (strain ICC168) (Citrobacter freundii biotype 4280) protein is Propionate kinase.